Here is a 194-residue protein sequence, read N- to C-terminus: Molybdenum cofactor guanylyltransferase (194 aa).

GTP-binding positions include 12-14, lysine 25, aspartate 71, and aspartate 101; that span reads LAG. Position 101 (aspartate 101) interacts with Mg(2+).

Belongs to the MobA family. As to quaternary structure, monomer. Requires Mg(2+) as cofactor.

It is found in the cytoplasm. It catalyses the reaction Mo-molybdopterin + GTP + H(+) = Mo-molybdopterin guanine dinucleotide + diphosphate. Transfers a GMP moiety from GTP to Mo-molybdopterin (Mo-MPT) cofactor (Moco or molybdenum cofactor) to form Mo-molybdopterin guanine dinucleotide (Mo-MGD) cofactor. In Salmonella typhimurium (strain LT2 / SGSC1412 / ATCC 700720), this protein is Molybdenum cofactor guanylyltransferase.